The sequence spans 194 residues: uncharacterized protein (194 aa).

Residues 25-156 (PSWACRRGGP…ESPLGTLPCS (132 aa)) are disordered. The segment covering 43 to 57 (GPSTVPVTPTAGSCQ) has biased composition (polar residues). A compositionally biased stretch (low complexity) spans 104–113 (SSSPGPSFHL).

This is an uncharacterized protein from Homo sapiens (Human).